A 449-amino-acid polypeptide reads, in one-letter code: Probable mitochondrial chaperone bcs1 (449 aa).

Over M1–S20 the chain is Mitochondrial intermembrane. A helical membrane pass occupies residues G21–L41. The Mitochondrial matrix portion of the chain corresponds to R42–V449. ATP is bound at residue G249 to T256.

This sequence belongs to the AAA ATPase family. BCS1 subfamily.

It is found in the mitochondrion inner membrane. The enzyme catalyses ATP + H2O = ADP + phosphate + H(+). In terms of biological role, chaperone necessary for the incorporation of Rieske iron-sulfur protein rip1 into the mitochondrial respiratory chain complex III. This chain is Probable mitochondrial chaperone bcs1, found in Schizosaccharomyces pombe (strain 972 / ATCC 24843) (Fission yeast).